The sequence spans 29 residues: Cyclotide mden-A (29 aa).

The cyclopeptide (Gly-Asn) cross-link spans 1–29 (GIPTCGETCTLGTCNTPGCTCSWPICTKN). 3 disulfides stabilise this stretch: Cys-5–Cys-19, Cys-9–Cys-21, and Cys-14–Cys-26.

It belongs to the cyclotide family. Moebius subfamily. This is a cyclic peptide.

In terms of biological role, probably participates in a plant defense mechanism. This chain is Cyclotide mden-A, found in Melicytus dentatus (Tree violet).